The following is a 526-amino-acid chain: Reticulocyte-binding protein homolog 5 (526 aa).

Residues 1–24 (MIRIKKKLILTIIYIHLFILNRLS) form the signal peptide. The interval 33 to 51 (KNQENNLTLLPIKSTEEEK) is mediates interaction with human BSG. N-linked (GlcNAc...) asparagine glycans are attached at residues Asn-38 and Asn-214. 2 disulfides stabilise this stretch: Cys-224-Cys-317 and Cys-345-Cys-351. Acidic residues predominate over residues 259–279 (EIDDKSEETDDETEEVEDSIQ). A disordered region spans residues 259–294 (EIDDKSEETDDETEEVEDSIQDTDSNHTPSNKKKND). Asn-297 is a glycosylation site (N-linked (GlcNAc...) asparagine).

Forms a complex composed of RH5, P113 and human BSG/basigin; the complex bridges the merozoite and host erythrocyte membranes. Within the complex, interacts (via C-terminus) with human BSG/basigin isoform 2 (via the extracellular domain); the interaction is independent of BSG glycosylation status. Weakly interacts with P.troglodytes BSG but not with G.gorilla BSG. Also, interacts (via N-terminus) with P113; the interaction tethers RH5 to the merozoite membrane. Component of the PfRH5 adhesion complex composed of 1 copy of CyRPA, RH5 and RIPR; the complex is formed during merozoite invasion of host erythrocytes specifically at the interface between the parasite and host membranes. Within the complex, interacts with CyRPA. CyRPA recruits RIPR to the RH5-P113-BSG complex; the formation of the PfRH5 adhesion complex increases the affinity of RH5 for BSG and probably leads to the release of RH5 from P113 while maintaining the interaction of the PfRH5 adhesion complex with BSG. Cleaved into a 45kDa form during merozoite invasion of host erythrocyte.

The protein resides in the secreted. It localises to the cytoplasmic vesicle. It is found in the secretory vesicle. Its subcellular location is the rhoptry lumen. The protein localises to the host cell membrane. Essential for the invasion of host erythrocytes by blood stage merozoites. By binding P113 at the surface of the merozoite and human BSG/basigin on the erythrocyte membrane, leads to the establishment of a tight junction between the merozoite and host erythrocyte membranes. In addition, the interaction with BSG results in BSG dimerization which triggers an increase in intracellular Ca(2+) in the erythrocyte. This essential step leads to a rearrangement of the erythrocyte cytoskeleton required for the merozoite invasion. This is Reticulocyte-binding protein homolog 5 from Plasmodium falciparum (isolate 3D7).